The primary structure comprises 237 residues: Cytosolic-abundant heat soluble protein 86272 (237 aa).

The interval 96-125 is disordered; it reads FKDQEKYSREQAAIARAHDKDLEKKTEEYR. The segment covering 111 to 125 has biased composition (basic and acidic residues); the sequence is RAHDKDLEKKTEEYR. Positions 115 to 193 form a coiled coil; that stretch reads KDLEKKTEEY…MNALEQSKMA (79 aa). 2 CAHS motif regions span residues 124-142 and 161-179; these read YRKT…LEKQ and QKRE…LEHE. The span at 204–215 shows a compositional bias: low complexity; it reads AGTTVSGGTTVS. Residues 204–237 are disordered; the sequence is AGTTVSGGTTVSEHTEVHDGKEKKSLGEKIKSLF. Residues 216–237 are compositionally biased toward basic and acidic residues; the sequence is EHTEVHDGKEKKSLGEKIKSLF.

The protein belongs to the Cytosolic-abundant heat soluble protein (CAHS) family.

It is found in the cytoplasm. Its function is as follows. CAHS proteins are cytosolic heat soluble proteins that seem to contribute to the anhydrobiosis in tardigrades, but their specific mechanisms are yet to be identified. It is possible that protection during anhydrobiosis might occur via the stabilization of vitrifying small molecules such as sugars, but not via the direct glass transition of CAHS proteins themselves. In Hypsibius exemplaris (Freshwater tardigrade), this protein is Cytosolic-abundant heat soluble protein 86272.